A 132-amino-acid polypeptide reads, in one-letter code: DNA-directed RNA polymerase subunit omega (132 aa).

The interval 90–109 (SSEAGGVLGTSSEEEGSSFD) is disordered.

It belongs to the RNA polymerase subunit omega family. As to quaternary structure, the RNAP catalytic core consists of 2 alpha, 1 beta, 1 beta' and 1 omega subunit. When a sigma factor is associated with the core the holoenzyme is formed, which can initiate transcription.

The catalysed reaction is RNA(n) + a ribonucleoside 5'-triphosphate = RNA(n+1) + diphosphate. Functionally, promotes RNA polymerase assembly. Latches the N- and C-terminal regions of the beta' subunit thereby facilitating its interaction with the beta and alpha subunits. The polypeptide is DNA-directed RNA polymerase subunit omega (Bartonella henselae (strain ATCC 49882 / DSM 28221 / CCUG 30454 / Houston 1) (Rochalimaea henselae)).